The primary structure comprises 124 residues: ATP synthase epsilon chain (124 aa).

This sequence belongs to the ATPase epsilon chain family. In terms of assembly, F-type ATPases have 2 components, CF(1) - the catalytic core - and CF(0) - the membrane proton channel. CF(1) has five subunits: alpha(3), beta(3), gamma(1), delta(1), epsilon(1). CF(0) has three main subunits: a, b and c.

The protein resides in the cell membrane. Produces ATP from ADP in the presence of a proton gradient across the membrane. This is ATP synthase epsilon chain from Corynebacterium efficiens (strain DSM 44549 / YS-314 / AJ 12310 / JCM 11189 / NBRC 100395).